The chain runs to 120 residues: MSKDQIIEAIKEMTVLELNDLVKAIEEEFGVTAAAPVAVAGGAAEGGAAEQTEFDVVLESAGSSKIGVIKVVREITGLGLKEAKALVDGAPAPIKEGVAKEEAEEIKGKLEEAGASVELK.

The protein belongs to the bacterial ribosomal protein bL12 family. In terms of assembly, homodimer. Part of the ribosomal stalk of the 50S ribosomal subunit. Forms a multimeric L10(L12)X complex, where L10 forms an elongated spine to which 2 to 4 L12 dimers bind in a sequential fashion. Binds GTP-bound translation factors.

Its function is as follows. Forms part of the ribosomal stalk which helps the ribosome interact with GTP-bound translation factors. Is thus essential for accurate translation. This chain is Large ribosomal subunit protein bL12, found in Shouchella clausii (strain KSM-K16) (Alkalihalobacillus clausii).